The following is a 308-amino-acid chain: uncharacterized protein (308 aa).

The active site involves E59.

This sequence belongs to the PhzF family.

This is an uncharacterized protein from Deinococcus radiodurans (strain ATCC 13939 / DSM 20539 / JCM 16871 / CCUG 27074 / LMG 4051 / NBRC 15346 / NCIMB 9279 / VKM B-1422 / R1).